The primary structure comprises 762 residues: Alpha-xylosidase XylQ (762 aa).

Asp-414 serves as the catalytic Nucleophile. Residue Glu-417 is part of the active site.

This sequence belongs to the glycosyl hydrolase 31 family.

It localises to the cell membrane. It carries out the reaction Hydrolysis of terminal, non-reducing alpha-D-xylose residues with release of alpha-D-xylose.. Its function is as follows. Involved in the metabolism of isoprimeverose. Hydrolyzes isoprimeverose into equimolar amounts of glucose and xylose. In vitro, can also use p-nitrophenyl-alpha-D-xylopyranoside (alpha-p-NPX). The protein is Alpha-xylosidase XylQ of Lactiplantibacillus pentosus (Lactobacillus pentosus).